A 739-amino-acid polypeptide reads, in one-letter code: Protein NPGR2 (739 aa).

The segment at 32 to 71 is disordered; it reads EQMRHREEEDKKSEVGVGRDYNGSSALSTAESENAKKLDN. Residues 33–45 are compositionally biased toward basic and acidic residues; that stretch reads QMRHREEEDKKSE. Positions 53 to 63 are enriched in polar residues; that stretch reads NGSSALSTAES. 9 TPR repeats span residues 90 to 127, 162 to 195, 215 to 248, 465 to 498, 500 to 533, 536 to 569, 592 to 625, 626 to 659, and 697 to 733; these read EEAR…KMKT, FEAI…VETS, TKAV…HWKL, PRVV…GAES, LEVW…TGKW, GKLL…LQVQ, LGTW…APYS, SVRY…DPMH, and HSAW…EETM.

In terms of assembly, interacts with calmodulin in a calcium-dependent manner. Expressed in pollen, flowers and fruits.

The protein is Protein NPGR2 of Arabidopsis thaliana (Mouse-ear cress).